Reading from the N-terminus, the 591-residue chain is Aspartate--tRNA ligase (591 aa).

Position 171 (Glu-171) interacts with L-aspartate. An aspartate region spans residues Gln-195–Lys-198. Arg-217 is a binding site for L-aspartate. ATP-binding positions include Arg-217–Glu-219 and Gln-226. L-aspartate is bound at residue His-448. Residue Glu-482 coordinates ATP. Arg-489 contacts L-aspartate. ATP is bound at residue Gly-534 to Arg-537.

This sequence belongs to the class-II aminoacyl-tRNA synthetase family. Type 1 subfamily. In terms of assembly, homodimer.

It is found in the cytoplasm. It carries out the reaction tRNA(Asp) + L-aspartate + ATP = L-aspartyl-tRNA(Asp) + AMP + diphosphate. Its function is as follows. Catalyzes the attachment of L-aspartate to tRNA(Asp) in a two-step reaction: L-aspartate is first activated by ATP to form Asp-AMP and then transferred to the acceptor end of tRNA(Asp). The chain is Aspartate--tRNA ligase from Aliivibrio salmonicida (strain LFI1238) (Vibrio salmonicida (strain LFI1238)).